We begin with the raw amino-acid sequence, 326 residues long: Pyruvate dehydrogenase E1 component subunit alpha (326 aa).

As to quaternary structure, heterodimer of an alpha and a beta chain. It depends on thiamine diphosphate as a cofactor.

The catalysed reaction is N(6)-[(R)-lipoyl]-L-lysyl-[protein] + pyruvate + H(+) = N(6)-[(R)-S(8)-acetyldihydrolipoyl]-L-lysyl-[protein] + CO2. The pyruvate dehydrogenase complex catalyzes the overall conversion of pyruvate to acetyl-CoA and CO(2). It contains multiple copies of three enzymatic components: pyruvate dehydrogenase (E1), dihydrolipoamide acetyltransferase (E2) and lipoamide dehydrogenase (E3). The chain is Pyruvate dehydrogenase E1 component subunit alpha (pdhA) from Rickettsia conorii (strain ATCC VR-613 / Malish 7).